The primary structure comprises 361 residues: Molybdenum import ATP-binding protein ModC (361 aa).

Positions 1 to 235 (MDGLRLRFRR…VDLPLALDDD (235 aa)) constitute an ABC transporter domain. 33 to 40 (GHSGSGKS) provides a ligand contact to ATP. A Mop domain is found at 296–361 (QSSILNRLPV…AQIKSVAVLA (66 aa)).

Belongs to the ABC transporter superfamily. Molybdate importer (TC 3.A.1.8) family. The complex is composed of two ATP-binding proteins (ModC), two transmembrane proteins (ModB) and a solute-binding protein (ModA).

The protein resides in the cell inner membrane. The enzyme catalyses molybdate(out) + ATP + H2O = molybdate(in) + ADP + phosphate + H(+). Functionally, part of the ABC transporter complex ModABC involved in molybdenum import. Responsible for energy coupling to the transport system. The sequence is that of Molybdenum import ATP-binding protein ModC from Pseudomonas aeruginosa (strain ATCC 15692 / DSM 22644 / CIP 104116 / JCM 14847 / LMG 12228 / 1C / PRS 101 / PAO1).